A 247-amino-acid chain; its full sequence is MKAGMFYCASQASTATANGERTVTARAIDRHNPIIKDGRRSFTAPCSSGDDYVAPYRQLSKITRVPSSSGDGKSVQVDKGRRSNSGSLMKLISYDVSLARKSFGCVVATPKTPPGSTRYLLGSDPVSLAGSTGQDTVATEESEASAPKRGSSGPVEEKKKSSGSGSDQVVVLRVSLHCHCRGCQGKVKKHLSKMQGVTSFNIDFASKKVTVTGDITPLEVLGCLSKVKNAQFWTPPPPSIPRANPET.

The disordered stretch occupies residues 130–166; sequence GSTGQDTVATEESEASAPKRGSSGPVEEKKKSSGSGS. The 69-residue stretch at 167–235 folds into the HMA domain; the sequence is DQVVVLRVSL…KVKNAQFWTP (69 aa). Residues Cys180 and Cys183 each coordinate a metal cation.

The protein localises to the cytoplasm. Its function is as follows. Heavy metal-associated protein involved in salt tolerance. The protein is Protein SODIUM POTASSIUM ROOT DEFECTIVE 3 of Arabidopsis thaliana (Mouse-ear cress).